Consider the following 407-residue polypeptide: 1-deoxy-D-xylulose 5-phosphate reductoisomerase (407 aa).

NADPH is bound by residues Thr-25, Gly-26, Ser-27, Ile-28, Asn-53, and Asn-136. Residue Lys-137 coordinates 1-deoxy-D-xylulose 5-phosphate. Glu-138 lines the NADPH pocket. Asp-162 is a binding site for Mn(2+). Ser-163, Glu-164, Ser-188, and His-211 together coordinate 1-deoxy-D-xylulose 5-phosphate. Glu-164 lines the Mn(2+) pocket. Gly-217 provides a ligand contact to NADPH. The 1-deoxy-D-xylulose 5-phosphate site is built by Ser-224, Asn-229, Lys-230, and Glu-233. Glu-233 contacts Mn(2+).

It belongs to the DXR family. The cofactor is Mg(2+). Requires Mn(2+) as cofactor.

The catalysed reaction is 2-C-methyl-D-erythritol 4-phosphate + NADP(+) = 1-deoxy-D-xylulose 5-phosphate + NADPH + H(+). The protein operates within isoprenoid biosynthesis; isopentenyl diphosphate biosynthesis via DXP pathway; isopentenyl diphosphate from 1-deoxy-D-xylulose 5-phosphate: step 1/6. Catalyzes the NADPH-dependent rearrangement and reduction of 1-deoxy-D-xylulose-5-phosphate (DXP) to 2-C-methyl-D-erythritol 4-phosphate (MEP). The protein is 1-deoxy-D-xylulose 5-phosphate reductoisomerase of Afipia carboxidovorans (strain ATCC 49405 / DSM 1227 / KCTC 32145 / OM5) (Oligotropha carboxidovorans).